We begin with the raw amino-acid sequence, 327 residues long: Voltage-dependent calcium channel gamma-4 subunit (327 aa).

Over 1 to 9 the chain is Cytoplasmic; it reads MVRCDRGLQ. A helical membrane pass occupies residues 10–30; the sequence is MLLTTAGAFAAFSLMAIAIGT. At 31-107 the chain is on the extracellular side; it reads DYWLYSSAHI…EYLLRIVRAS (77 aa). 2 N-linked (GlcNAc...) asparagine glycosylation sites follow: Asn42 and Asn45. Residues 108–128 form a helical membrane-spanning segment; sequence SVFPILSTILLLLGGLCIGAG. Topologically, residues 129 to 136 are cytoplasmic; it reads RIYSRKNN. The chain crosses the membrane as a helical span at residues 137-157; that stretch reads IVLSAGILFVAAGLSNIIGII. Topologically, residues 158–186 are extracellular; sequence VYISSNTGDPSDKRDEDKKNHYNYGWSFY. Residues 187–207 form a helical membrane-spanning segment; the sequence is FGALSFIVAETVGVLAVNIYI. The Cytoplasmic segment spans residues 208–327; sequence EKNKELRFKT…SMLNRRTTPV (120 aa). A disordered region spans residues 235-261; that stretch reads SYRYRRRRSRSSSRSTEASPSRDVSPM. Over residues 246 to 256 the composition is skewed to low complexity; sequence SSRSTEASPSR. Ser259 is modified (phosphoserine).

This sequence belongs to the PMP-22/EMP/MP20 family. CACNG subfamily. In terms of assembly, interacts with CACNA1C. Identified in a complex with the L-type calcium channel subunits CACNA1C, CACNA2D1 and either CACNB1 or CACNB2. Acts as an auxiliary subunit for AMPA-selective glutamate receptors (AMPARs). Interacts with GRIA1. Detected in heart left ventricle.

It is found in the cell membrane. In terms of biological role, regulates the activity of L-type calcium channels that contain CACNA1C as pore-forming subunit. Regulates the trafficking and gating properties of AMPA-selective glutamate receptors (AMPARs), including GRIA1 and GRIA4. Promotes their targeting to the cell membrane and synapses and modulates their gating properties by slowing their rates of activation, deactivation and desensitization and by mediating their resensitization. The chain is Voltage-dependent calcium channel gamma-4 subunit (CACNG4) from Homo sapiens (Human).